The primary structure comprises 412 residues: STAGA complex 65 subunit gamma (412 aa).

A disordered region spans residues 81–107; the sequence is AQTQSQQQTEGVKAEESEPLPSCPGSP. A Phosphoserine modification is found at serine 106. Lysine 269 participates in a covalent cross-link: Glycyl lysine isopeptide (Lys-Gly) (interchain with G-Cter in SUMO2). 2 positions are modified to phosphoserine: serine 321 and serine 332. The segment at 364–412 is disordered; the sequence is EEPMSGMSEAGLPQSPDDSDSSYGSHSTDSLMGSSPVFNQRCRKRMRKI. A compositionally biased stretch (low complexity) spans 384-393; that stretch reads SSYGSHSTDS.

As to quaternary structure, component of the STAGA transcription coactivator-HAT complex, at least composed of SUPT3H, SUPT7L, GCN5L2, TAF5L, TAF6L, TADA3L, TAD1L, TAF10, TAF12 and TAF9. In terms of processing, sumoylated.

It is found in the nucleus. The protein is STAGA complex 65 subunit gamma (Supt7l) of Mus musculus (Mouse).